A 362-amino-acid polypeptide reads, in one-letter code: MNSLVSTTAIEAQSQAAASEEVVRLTDVKRRFGTTAALDGISLTVKRGEILGIIGRSGAGKSTLIRCLNGLERADSGEILIEGRDITGLSEQELQPLRRRIGMIFQHFNLLSAKTVEENVALPLKIEGLAKSERLKRAHELLELVGLADKAKAYPASLSGGQKQRVGIARALAARPALLLSDEATSALDPETTRSILALLKDINRKLGLTILLITHEMEVVRGIADRVAVIDAGRIVEEGQVWSVFANPQAEITGSLLCGIRPQLPEHIAGRLSAAAGSEAILSVDLAGPQAQGALFAELSAALPHSFRLVHGGIDHIQNQPVARFFIAVPARDPALAGKVEQFLTARSARVEVLGYDTDHA.

Positions 23–258 (VRLTDVKRRF…PQAEITGSLL (236 aa)) constitute an ABC transporter domain. 55-62 (GRSGAGKS) is a binding site for ATP.

It belongs to the ABC transporter superfamily. Methionine importer (TC 3.A.1.24) family. As to quaternary structure, the complex is composed of two ATP-binding proteins (MetN), two transmembrane proteins (MetI) and a solute-binding protein (MetQ).

It is found in the cell inner membrane. The catalysed reaction is L-methionine(out) + ATP + H2O = L-methionine(in) + ADP + phosphate + H(+). The enzyme catalyses D-methionine(out) + ATP + H2O = D-methionine(in) + ADP + phosphate + H(+). Part of the ABC transporter complex MetNIQ involved in methionine import. Responsible for energy coupling to the transport system. The protein is Methionine import ATP-binding protein MetN of Rhizobium johnstonii (strain DSM 114642 / LMG 32736 / 3841) (Rhizobium leguminosarum bv. viciae).